The following is a 1229-amino-acid chain: Chitin synthase 4 (1229 aa).

The tract at residues 1 to 196 (MSLPERPGAK…IVKEGKRKEK (196 aa)) is disordered. Residues 1 to 202 (MSLPERPGAK…RKEKIPEQLR (202 aa)) lie on the Cytoplasmic side of the membrane. Positions 18–27 (SYRKSPSRRN) are enriched in basic residues. Residues 43–66 (GQHQRGPSVNSFAETIRSPNSNIE) are compositionally biased toward polar residues. The segment covering 92–105 (IRPERNRIDRDHPN) has biased composition (basic and acidic residues). Low complexity predominate over residues 137-150 (SGPPSGSNSASGSG). 2 stretches are compositionally biased toward basic and acidic residues: residues 164–177 (SGRE…DNTR) and 187–196 (IVKEGKRKEK). Residues 203–223 (PPSAWNVYCAVITFWSPDFIM) traverse the membrane as a helical segment. At 224–240 (KCCGMPAKAQRRAWREK) the chain is on the extracellular side. Residues 241–261 (IGLISLILIIMGVVGFLTFGF) form a helical membrane-spanning segment. The Cytoplasmic portion of the chain corresponds to 262–495 (NQAVCGGPVL…IKVGTVDTDT (234 aa)). A helical membrane pass occupies residues 496 to 516 (VGCIAAKVVLYVSLALILSVV). Topologically, residues 517–1054 (GARFTLALIF…LCGTFCFSMQ (538 aa)) are extracellular. 2 disordered regions span residues 539–589 (TSQT…RSSF) and 601–648 (GAER…DPYA). Residues 568–581 (GDVGSSVAGASSSD) show a composition bias toward low complexity. N-linked (GlcNAc...) asparagine glycosylation is found at N608, N635, and N1030. Polar residues predominate over residues 608 to 648 (NKSMPTTMASQASGGYMGPSSTAYRETNESRTSFLKSDPYA). The helical transmembrane segment at 1055 to 1075 (FVIFIELIGTLVLPAAIAFTF) threads the bilayer. At 1076–1088 (YVVIISIINQPPQ) the chain is on the cytoplasmic side. A helical transmembrane segment spans residues 1089–1109 (IIPLVLLGLILGLPAILIIIT). Residues 1110–1114 (AHSWS) are Extracellular-facing. The chain crosses the membrane as a helical span at residues 1115 to 1135 (YVLWMLIYLLSLPVWNFVLPA). The Cytoplasmic portion of the chain corresponds to 1136-1229 (YAFWKFDDFS…QQYDEYYSDA (94 aa)). Residues 1210–1229 (WASAPPHHHQQQYDEYYSDA) form a disordered region.

The protein belongs to the chitin synthase family. Class IV subfamily.

The protein localises to the cell membrane. It carries out the reaction [(1-&gt;4)-N-acetyl-beta-D-glucosaminyl](n) + UDP-N-acetyl-alpha-D-glucosamine = [(1-&gt;4)-N-acetyl-beta-D-glucosaminyl](n+1) + UDP + H(+). Its function is as follows. Polymerizes chitin, a structural polymer of the cell wall and septum, by transferring the sugar moiety of UDP-GlcNAc to the non-reducing end of the growing chitin polymer. Might function as a negative regulator on expression of other CHS genes. This is Chitin synthase 4 from Pyricularia oryzae (strain 70-15 / ATCC MYA-4617 / FGSC 8958) (Rice blast fungus).